The chain runs to 132 residues: Small ribosomal subunit protein uS17c (132 aa).

A compositionally biased stretch (low complexity) spans 1 to 11 (MLLLSSPFVSV). Disordered stretches follow at residues 1–23 (MLLLSSPFVSVSPPPPPLSSHGA) and 104–132 (PLPPRDTRRKSQLLPPLQSDDDQEPSSRE). The N-terminal 31 residues, 1-31 (MLLLSSPFVSVSPPPPPLSSHGARPALRIEA), are a transit peptide targeting the chloroplast. The segment covering 122 to 132 (SDDDQEPSSRE) has biased composition (acidic residues).

This sequence belongs to the universal ribosomal protein uS17 family. Part of the 30S ribosomal subunit.

It is found in the plastid. The protein resides in the chloroplast. Its function is as follows. One of the primary rRNA binding proteins, it binds specifically to the 5'-end of 16S ribosomal RNA. In the hcf60 mutation the Activator tag is inserted 17 base pars upstream of the initiation codon. This mutation is seedling lethal, due to plastid ribosome insufficiency. However under non-light stressed conditions photosynthesis and oxygen evolution can occur. The sequence is that of Small ribosomal subunit protein uS17c (RPS17) from Zea mays (Maize).